The primary structure comprises 310 residues: tRNA dimethylallyltransferase (310 aa).

ATP is bound at residue 24 to 31 (GPTASGKT). Residue 26–31 (TASGKT) coordinates substrate. The tract at residues 49 to 52 (DSRQ) is interaction with substrate tRNA.

The protein belongs to the IPP transferase family. Monomer. The cofactor is Mg(2+).

It catalyses the reaction adenosine(37) in tRNA + dimethylallyl diphosphate = N(6)-dimethylallyladenosine(37) in tRNA + diphosphate. Functionally, catalyzes the transfer of a dimethylallyl group onto the adenine at position 37 in tRNAs that read codons beginning with uridine, leading to the formation of N6-(dimethylallyl)adenosine (i(6)A). This is tRNA dimethylallyltransferase from Synechococcus sp. (strain CC9311).